Consider the following 529-residue polypeptide: Alkaline phosphatase, germ cell type (529 aa).

An N-terminal signal peptide occupies residues 1 to 18 (MWGACLLLLGLSLQVCPS). Mg(2+) is bound at residue Asp-60. 2 residues coordinate Zn(2+): Asp-60 and Ser-110. Ser-110 functions as the Phosphoserine intermediate in the catalytic mechanism. Cys-139 and Cys-201 are joined by a disulfide. Asn-140 carries an N-linked (GlcNAc...) asparagine glycan. Ser-173 contacts Mg(2+). Glu-234 contacts Ca(2+). N-linked (GlcNAc...) asparagine glycosylation is found at Asn-267 and Asn-277. 3 residues coordinate Ca(2+): Phe-287, Glu-288, and Asp-303. Glu-329 is a binding site for Mg(2+). The Zn(2+) site is built by Asp-334, His-338, Asp-375, His-376, and His-450. Cys-485 and Cys-492 are disulfide-bonded. Ser-502 is lipidated: GPI-anchor amidated serine. Residues 503–529 (AVSPGYMSTLLCLLAGKMLMLMAAAEP) constitute a propeptide, removed in mature form.

It belongs to the alkaline phosphatase family. As to quaternary structure, homodimer. Mg(2+) is required as a cofactor. It depends on Zn(2+) as a cofactor. The cofactor is Ca(2+). In terms of tissue distribution, embryo and testis.

The protein resides in the cell membrane. The catalysed reaction is a phosphate monoester + H2O = an alcohol + phosphate. With respect to regulation, inhibited by L-leucine, EDTA and heat. Its function is as follows. Alkaline phosphatase that can hydrolyze various phosphate compounds. The chain is Alkaline phosphatase, germ cell type (Alpg) from Mus musculus (Mouse).